The following is a 435-amino-acid chain: GTPase Der (435 aa).

EngA-type G domains follow at residues 4-167 and 175-350; these read PTLA…PSED and IKFS…ENQT. Residues 10–17, 57–61, 119–122, 181–188, 228–232, and 293–296 contribute to the GTP site; these read GRPNVGKS, DTGGI, NKVD, DTAGI, and NKWD. Positions 351 to 435 constitute a KH-like domain; the sequence is RRIQSSVLND…PIHIIARKRK (85 aa).

The protein belongs to the TRAFAC class TrmE-Era-EngA-EngB-Septin-like GTPase superfamily. EngA (Der) GTPase family. Associates with the 50S ribosomal subunit.

Functionally, GTPase that plays an essential role in the late steps of ribosome biogenesis. The sequence is that of GTPase Der from Lacticaseibacillus casei (strain BL23) (Lactobacillus casei).